We begin with the raw amino-acid sequence, 287 residues long: Nitrogenase iron protein (287 aa).

8-15 (GKGGIGKS) contacts ATP. A [4Fe-4S] cluster-binding site is contributed by Cys-96. Arg-99 carries the ADP-ribosylarginine; by dinitrogenase reductase ADP-ribosyltransferase modification. Cys-130 lines the [4Fe-4S] cluster pocket.

Belongs to the NifH/BchL/ChlL family. As to quaternary structure, homodimer. The cofactor is [4Fe-4S] cluster. The reversible ADP-ribosylation of Arg-99 inactivates the nitrogenase reductase and regulates nitrogenase activity.

It carries out the reaction N2 + 8 reduced [2Fe-2S]-[ferredoxin] + 16 ATP + 16 H2O = H2 + 8 oxidized [2Fe-2S]-[ferredoxin] + 2 NH4(+) + 16 ADP + 16 phosphate + 6 H(+). Functionally, the key enzymatic reactions in nitrogen fixation are catalyzed by the nitrogenase complex, which has 2 components: the iron protein and the molybdenum-iron protein. In Frankia sp. (strain EuIK1), this protein is Nitrogenase iron protein (nifH).